The chain runs to 358 residues: METLTVNLAERSYPIYVGAGLLTSSALFAPHIAGQRVMIVTNDTVAPLYLDVLRKTLAGYQIDTLILPDGEAHKTLASFEVIMSALLKGTHGRDTTLIALGGGVIGDLVGFAAACYQRGVPFIQVPTTLLSQVDSSVGGKTAVNHPLGKNMIGAFYQPKAVIIDIDCLRTLPSRELAAGMAEVIKYGIIWDADFFSWLEQHISDIQSLSPDALSKIILRCCAIKADVVAQDETENGVRALLNLGHTFGHAIEAEQGYGKWLHGEAVAAGTVQAAETSLRLGLLSDTDVSRIKALLKAANLPVTAPADMTYDDYIHHMLRDKKAKAGKLRLVLPQAIGRADLFTDVEQTVLRAVIDATH.

NAD(+)-binding positions include 69-74, 103-107, 127-128, Lys-140, Lys-149, and 167-170; these read DGEAHK, GVIGD, TT, and CLRT. Residues Glu-182, His-245, and His-262 each coordinate Zn(2+).

The protein belongs to the sugar phosphate cyclases superfamily. Dehydroquinate synthase family. Co(2+) is required as a cofactor. It depends on Zn(2+) as a cofactor. NAD(+) serves as cofactor.

The protein resides in the cytoplasm. It catalyses the reaction 7-phospho-2-dehydro-3-deoxy-D-arabino-heptonate = 3-dehydroquinate + phosphate. Its pathway is metabolic intermediate biosynthesis; chorismate biosynthesis; chorismate from D-erythrose 4-phosphate and phosphoenolpyruvate: step 2/7. Its function is as follows. Catalyzes the conversion of 3-deoxy-D-arabino-heptulosonate 7-phosphate (DAHP) to dehydroquinate (DHQ). This is 3-dehydroquinate synthase from Tolumonas auensis (strain DSM 9187 / NBRC 110442 / TA 4).